The sequence spans 415 residues: Calcium/calmodulin-dependent serine/threonine-protein kinase (415 aa).

One can recognise a Protein kinase domain in the interval 12-308 (YEISEILGRG…AQELLDHPWV (297 aa)). Residues 18-26 (LGRGGFSVV) and Lys46 each bind ATP. The active-site Proton acceptor is the Asp173. The segment at 318–328 (MDAEIVSRLQS) is calmodulin-binding.

It belongs to the protein kinase superfamily. CAMK Ser/Thr protein kinase family. CaMK subfamily.

The catalysed reaction is L-seryl-[protein] + ATP = O-phospho-L-seryl-[protein] + ADP + H(+). It catalyses the reaction L-threonyl-[protein] + ATP = O-phospho-L-threonyl-[protein] + ADP + H(+). Functionally, may be involved in signal transduction processes. The chain is Calcium/calmodulin-dependent serine/threonine-protein kinase from Malus domestica (Apple).